A 384-amino-acid polypeptide reads, in one-letter code: Ubiquitin-like modifier-activating enzyme 5 (384 aa).

Gly-63, Asp-84, Lys-107, Asn-130, and Asn-164 together coordinate ATP. Residues Cys-206 and Cys-209 each contribute to the Zn(2+) site. Catalysis depends on Cys-230, which acts as the Glycyl thioester intermediate. Residues Cys-283 and Cys-288 each coordinate Zn(2+). The tract at residues Glu-352–Glu-375 is disordered.

It belongs to the ubiquitin-activating E1 family. UBA5 subfamily.

E1-like enzyme which activates UFM1. The sequence is that of Ubiquitin-like modifier-activating enzyme 5 from Drosophila persimilis (Fruit fly).